The sequence spans 206 residues: Uridine kinase (206 aa).

11–18 (GGSASGKT) contributes to the ATP binding site.

It belongs to the uridine kinase family.

Its subcellular location is the cytoplasm. It carries out the reaction uridine + ATP = UMP + ADP + H(+). It catalyses the reaction cytidine + ATP = CMP + ADP + H(+). It functions in the pathway pyrimidine metabolism; CTP biosynthesis via salvage pathway; CTP from cytidine: step 1/3. The protein operates within pyrimidine metabolism; UMP biosynthesis via salvage pathway; UMP from uridine: step 1/1. The protein is Uridine kinase of Lactococcus lactis subsp. cremoris (strain MG1363).